The primary structure comprises 151 residues: Deoxyuridine 5'-triphosphate nucleotidohydrolase (151 aa).

Substrate is bound by residues 70-72 (RSG), N83, 87-89 (LID), and M97.

It belongs to the dUTPase family. It depends on Mg(2+) as a cofactor.

It carries out the reaction dUTP + H2O = dUMP + diphosphate + H(+). It participates in pyrimidine metabolism; dUMP biosynthesis; dUMP from dCTP (dUTP route): step 2/2. Functionally, this enzyme is involved in nucleotide metabolism: it produces dUMP, the immediate precursor of thymidine nucleotides and it decreases the intracellular concentration of dUTP so that uracil cannot be incorporated into DNA. In Hamiltonella defensa subsp. Acyrthosiphon pisum (strain 5AT), this protein is Deoxyuridine 5'-triphosphate nucleotidohydrolase.